Here is a 173-residue protein sequence, read N- to C-terminus: Chromophore lyase CpcS/CpeS 3 (173 aa).

The protein belongs to the CpcS/CpeS biliprotein lyase family.

In terms of biological role, covalently attaches a chromophore to Cys residue(s) of phycobiliproteins. In Trichodesmium erythraeum (strain IMS101), this protein is Chromophore lyase CpcS/CpeS 3.